Consider the following 331-residue polypeptide: UPF0194 membrane protein YbhG (331 aa).

Residues 1-19 (MKKPVVIGLAIAAIVAVIA) form the signal peptide. The stretch at 107-208 (EEIAQAAAAV…LDLQDTTLIA (102 aa)) forms a coiled coil.

Belongs to the UPF0194 family.

It is found in the periplasm. This is UPF0194 membrane protein YbhG from Salmonella heidelberg (strain SL476).